Here is a 426-residue protein sequence, read N- to C-terminus: Mothers against decapentaplegic homolog 7 (426 aa).

The disordered stretch occupies residues Leu-13–Pro-55. Basic and acidic residues predominate over residues Leu-37 to Ala-47. N6-acetyllysine; alternate is present on residues Lys-64 and Lys-70. Residues Lys-64 and Lys-70 each participate in a glycyl lysine isopeptide (Lys-Gly) (interchain with G-Cter in ubiquitin); alternate cross-link. The 144-residue stretch at Lys-64 to Pro-207 folds into the MH1 domain. Zn(2+) is bound by residues Cys-125, Cys-180, Cys-192, and His-197. A PY-motif motif is present at residues Pro-208–Tyr-211. Positions Pro-208–Asp-217 are important for interaction with SMURF2. The residue at position 249 (Ser-249) is a Phosphoserine. Residues Trp-261–Arg-426 form the MH2 domain.

The protein belongs to the dwarfin/SMAD family. In terms of assembly, interacts with WWP1. Interacts with COPS5. Interacts with NEDD4L. Interacts with STAMBP. Interacts with RNF111, AXIN1 and AXIN2. Interacts with PPP1R15A. Interacts (via MH2 domain) with EP300. Interacts with ACVR1B, SMURF1, SMURF2 and TGFBR1; SMAD7 recruits SMURF1 and SMURF2 to the TGF-beta receptor and regulates its degradation. Interacts with PDPK1 (via PH domain). Interacts with TSC22D1/TSC-22; the interaction requires TGF-beta and the interaction is inhibited by TGFBR1. In terms of processing, phosphorylation on Ser-249 does not affect its stability, nuclear localization or inhibitory function in TGFB signaling; however it affects its ability to regulate transcription. Phosphorylated by PDPK1. Ubiquitinated by WWP1. Polyubiquitinated by RNF111, which is enhanced by AXIN1 and promotes proteasomal degradation. In response to TGF-beta, ubiquitinated by SMURF1; which promotes its degradation. Post-translationally, acetylation prevents ubiquitination and degradation mediated by SMURF1. In terms of tissue distribution, ubiquitous with higher expression in the lung and vascular endothelium.

Its subcellular location is the nucleus. It localises to the cytoplasm. In terms of biological role, antagonist of signaling by TGF-beta (transforming growth factor) type 1 receptor superfamily members; has been shown to inhibit TGF-beta (Transforming growth factor) and activin signaling by associating with their receptors thus preventing SMAD2 access. Functions as an adapter to recruit SMURF2 to the TGF-beta receptor complex. Also acts by recruiting the PPP1R15A-PP1 complex to TGFBR1, which promotes its dephosphorylation. Positively regulates PDPK1 kinase activity by stimulating its dissociation from the 14-3-3 protein YWHAQ which acts as a negative regulator. This Homo sapiens (Human) protein is Mothers against decapentaplegic homolog 7 (SMAD7).